Consider the following 357-residue polypeptide: GTPase Obg (357 aa).

An Obg domain is found at 1–158 (MFVDNIKLKV…LEIVLELKLI (158 aa)). One can recognise an OBG-type G domain in the interval 159–345 (ADVGLVGFPN…LKFALFDLVE (187 aa)). GTP contacts are provided by residues 165–172 (GFPNAGKS), 190–194 (FTTLT), 212–215 (DIPG), 280–283 (TKCD), and 326–328 (SSV). Ser-172 and Thr-192 together coordinate Mg(2+).

It belongs to the TRAFAC class OBG-HflX-like GTPase superfamily. OBG GTPase family. In terms of assembly, monomer. The cofactor is Mg(2+).

It is found in the cytoplasm. Its function is as follows. An essential GTPase which binds GTP, GDP and possibly (p)ppGpp with moderate affinity, with high nucleotide exchange rates and a fairly low GTP hydrolysis rate. Plays a role in control of the cell cycle, stress response, ribosome biogenesis and in those bacteria that undergo differentiation, in morphogenesis control. This chain is GTPase Obg, found in Nautilia profundicola (strain ATCC BAA-1463 / DSM 18972 / AmH).